The primary structure comprises 261 residues: uncharacterized protein (261 aa).

An N-terminal signal peptide occupies residues 1-22 (MIHSKKLTLGICLVLLIILIGG). The N-palmitoyl cysteine moiety is linked to residue Cys-23. Residue Cys-23 is the site of S-diacylglycerol cysteine attachment.

This sequence belongs to the staphylococcal tandem lipoprotein family.

It localises to the cell membrane. This is an uncharacterized protein from Staphylococcus aureus (strain NCTC 8325 / PS 47).